Here is a 47-residue protein sequence, read N- to C-terminus: Defensin-like protein 1 (47 aa).

Intrachain disulfides connect C3/C47, C14/C36, C20/C41, and C24/C43.

The protein belongs to the DEFL family. Protease inhibitor I18 (RTI/MTI-2) subfamily.

This Sorghum bicolor (Sorghum) protein is Defensin-like protein 1.